The primary structure comprises 105 residues: Nucleoid-associated protein ABC0038 (105 aa).

Residues 1–22 (MEMKNMGNMMKQMQKMQKQMMK) are compositionally biased toward low complexity. Positions 1-26 (MEMKNMGNMMKQMQKMQKQMMKAQEE) are disordered.

It belongs to the YbaB/EbfC family. Homodimer.

The protein resides in the cytoplasm. It localises to the nucleoid. Binds to DNA and alters its conformation. May be involved in regulation of gene expression, nucleoid organization and DNA protection. The sequence is that of Nucleoid-associated protein ABC0038 from Shouchella clausii (strain KSM-K16) (Alkalihalobacillus clausii).